Consider the following 678-residue polypeptide: MAYKMHTKSFILHSDFSPSGDQPQAITQLIEGLENGLAHQTLLGVTGSGKTFTIANVIAKLNRPAMVLAPNKTLAAQLYAEMKAFFPENAVEYFVSYYDYYQPEAYVPSSDTFIEKDASINDQIEQMRLSATKSFLERRDTIVVASVSAIYGLGDPDSYLKMMLHLQTGAIINQRQILAQLAELQYTRNDQAFERGTFRVRGEIIDIFPAESDDKAIRIELFDDEIERLSLFDPLTGSSFGPVPRYTIYPKTHYVTPRERILNAIEKIKQELAERRQFLLENNKLLEEQRITQRTQFDIEMMNELGYCSGIENYSRYLSGRNEGEPPPTLFDYMPSDALLIIDESHVTVPQIGGMYRGDRSRKETLVEYGFRLPSALDNRPLRFEEFERLAPQTIYVSATPGPYELEKSGGEIIDQVVRPTGLLDPEIEIRPVAIQVDDLLSEARQRADQNERVLVTTLTKKMAEDLTDYLDEHGIRVRYLHSDIDTVERVEIIRDLRLGEFDVLVGINLLREGLDIPEVSLVAILDADKEGFLRSERSLIQTIGRAARNLKGKAILYADRITNSMQKAITETNRRREKQMKYNEARGIVPQALNKKVGELLDIGQGANQKAKANRNAKKVAEPTALYVVPQTAKEYQQQIKKLEQQMYKYAQDLEFEKAAAVRDQLQQLREHFFEVQ.

Residues 31 to 417 (EGLENGLAHQ…KSGGEIIDQV (387 aa)) form the Helicase ATP-binding domain. 44 to 51 (GVTGSGKT) is a binding site for ATP. The Beta-hairpin signature appears at 97 to 120 (YYDYYQPEAYVPSSDTFIEKDASI). One can recognise a Helicase C-terminal domain in the interval 436-589 (QVDDLLSEAR…QMKYNEARGI (154 aa)). Residues 638–673 (QQQIKKLEQQMYKYAQDLEFEKAAAVRDQLQQLREH) enclose the UVR domain.

The protein belongs to the UvrB family. In terms of assembly, forms a heterotetramer with UvrA during the search for lesions. Interacts with UvrC in an incision complex.

It is found in the cytoplasm. Its function is as follows. The UvrABC repair system catalyzes the recognition and processing of DNA lesions. A damage recognition complex composed of 2 UvrA and 2 UvrB subunits scans DNA for abnormalities. Upon binding of the UvrA(2)B(2) complex to a putative damaged site, the DNA wraps around one UvrB monomer. DNA wrap is dependent on ATP binding by UvrB and probably causes local melting of the DNA helix, facilitating insertion of UvrB beta-hairpin between the DNA strands. Then UvrB probes one DNA strand for the presence of a lesion. If a lesion is found the UvrA subunits dissociate and the UvrB-DNA preincision complex is formed. This complex is subsequently bound by UvrC and the second UvrB is released. If no lesion is found, the DNA wraps around the other UvrB subunit that will check the other stand for damage. This chain is UvrABC system protein B, found in Pasteurella multocida (strain Pm70).